Here is a 443-residue protein sequence, read N- to C-terminus: Histidinol dehydrogenase (443 aa).

Positions 141, 203, and 226 each coordinate NAD(+). The substrate site is built by serine 249, glutamine 271, and histidine 274. Residues glutamine 271 and histidine 274 each coordinate Zn(2+). Catalysis depends on proton acceptor residues glutamate 339 and histidine 340. Substrate is bound by residues histidine 340, aspartate 373, glutamate 427, and histidine 432. Aspartate 373 contributes to the Zn(2+) binding site. Histidine 432 lines the Zn(2+) pocket.

Belongs to the histidinol dehydrogenase family. Zn(2+) serves as cofactor.

It catalyses the reaction L-histidinol + 2 NAD(+) + H2O = L-histidine + 2 NADH + 3 H(+). Its pathway is amino-acid biosynthesis; L-histidine biosynthesis; L-histidine from 5-phospho-alpha-D-ribose 1-diphosphate: step 9/9. In terms of biological role, catalyzes the sequential NAD-dependent oxidations of L-histidinol to L-histidinaldehyde and then to L-histidine. This Chlorobium luteolum (strain DSM 273 / BCRC 81028 / 2530) (Pelodictyon luteolum) protein is Histidinol dehydrogenase.